Consider the following 354-residue polypeptide: DNA polymerase IV (354 aa).

In terms of domain architecture, UmuC spans Ile-14 to Gly-198. Mg(2+)-binding residues include Asp-18 and Asp-116. Glu-117 is a catalytic residue.

The protein belongs to the DNA polymerase type-Y family. In terms of assembly, monomer. The cofactor is Mg(2+).

Its subcellular location is the cytoplasm. The catalysed reaction is DNA(n) + a 2'-deoxyribonucleoside 5'-triphosphate = DNA(n+1) + diphosphate. Its function is as follows. Poorly processive, error-prone DNA polymerase involved in untargeted mutagenesis. Copies undamaged DNA at stalled replication forks, which arise in vivo from mismatched or misaligned primer ends. These misaligned primers can be extended by PolIV. Exhibits no 3'-5' exonuclease (proofreading) activity. May be involved in translesional synthesis, in conjunction with the beta clamp from PolIII. This chain is DNA polymerase IV, found in Streptococcus gordonii (strain Challis / ATCC 35105 / BCRC 15272 / CH1 / DL1 / V288).